The chain runs to 484 residues: Poly(A) RNA polymerase GLD2 (484 aa).

Phosphoserine is present on residues serine 62 and serine 69. The tract at residues phenylalanine 72–histidine 97 is disordered. The Nuclear localization signal motif lies at lysine 76–arginine 92. Over residues arginine 77–arginine 90 the composition is skewed to basic and acidic residues. Serine 95 carries the phosphoserine modification. The Mg(2+) site is built by aspartate 213 and aspartate 215. A PAP-associated domain is found at asparagine 386 to asparagine 440.

It belongs to the DNA polymerase type-B-like family. GLD2 subfamily. Interacts with CPEB1, CPEB2, CPSF1 and PABPC1. Interacts with QKI isoform QKI7; promoting recruitment to miRNA miR-122 and miR-122 stabilization. Mg(2+) serves as cofactor. Requires Mn(2+) as cofactor. In terms of tissue distribution, expressed in brain. Within brain, it is expressed in cerebellum, hippocampus and medulla.

Its subcellular location is the cytoplasm. It is found in the nucleus. The enzyme catalyses RNA(n) + ATP = RNA(n)-3'-adenine ribonucleotide + diphosphate. In terms of biological role, cytoplasmic poly(A) RNA polymerase that adds successive AMP monomers to the 3'-end of specific RNAs, forming a poly(A) tail. In contrast to the canonical nuclear poly(A) RNA polymerase, it only adds poly(A) to selected cytoplasmic mRNAs. Does not play a role in replication-dependent histone mRNA degradation. Adds a single nucleotide to the 3' end of specific miRNAs, monoadenylation stabilizes and prolongs the activity of some but not all miRNAs. In Homo sapiens (Human), this protein is Poly(A) RNA polymerase GLD2.